The primary structure comprises 178 residues: Crossover junction endodeoxyribonuclease RuvC (178 aa).

Catalysis depends on residues Asp11, Glu71, and Asp143. Mg(2+)-binding residues include Asp11, Glu71, and Asp143.

It belongs to the RuvC family. Homodimer which binds Holliday junction (HJ) DNA. The HJ becomes 2-fold symmetrical on binding to RuvC with unstacked arms; it has a different conformation from HJ DNA in complex with RuvA. In the full resolvosome a probable DNA-RuvA(4)-RuvB(12)-RuvC(2) complex forms which resolves the HJ. Mg(2+) is required as a cofactor.

The protein resides in the cytoplasm. The enzyme catalyses Endonucleolytic cleavage at a junction such as a reciprocal single-stranded crossover between two homologous DNA duplexes (Holliday junction).. Functionally, the RuvA-RuvB-RuvC complex processes Holliday junction (HJ) DNA during genetic recombination and DNA repair. Endonuclease that resolves HJ intermediates. Cleaves cruciform DNA by making single-stranded nicks across the HJ at symmetrical positions within the homologous arms, yielding a 5'-phosphate and a 3'-hydroxyl group; requires a central core of homology in the junction. The consensus cleavage sequence is 5'-(A/T)TT(C/G)-3'. Cleavage occurs on the 3'-side of the TT dinucleotide at the point of strand exchange. HJ branch migration catalyzed by RuvA-RuvB allows RuvC to scan DNA until it finds its consensus sequence, where it cleaves and resolves the cruciform DNA. In Neisseria meningitidis serogroup B (strain ATCC BAA-335 / MC58), this protein is Crossover junction endodeoxyribonuclease RuvC.